We begin with the raw amino-acid sequence, 494 residues long: Argininosuccinate lyase (494 aa).

It belongs to the lyase 1 family. Argininosuccinate lyase subfamily.

The protein resides in the cytoplasm. The enzyme catalyses 2-(N(omega)-L-arginino)succinate = fumarate + L-arginine. Its pathway is amino-acid biosynthesis; L-arginine biosynthesis; L-arginine from L-ornithine and carbamoyl phosphate: step 3/3. This Methanosphaerula palustris (strain ATCC BAA-1556 / DSM 19958 / E1-9c) protein is Argininosuccinate lyase.